Here is a 459-residue protein sequence, read N- to C-terminus: UDP-N-acetylmuramoylalanine--D-glutamate ligase (459 aa).

119–125 is a binding site for ATP; sequence GTNGKTT.

The protein belongs to the MurCDEF family.

Its subcellular location is the cytoplasm. It catalyses the reaction UDP-N-acetyl-alpha-D-muramoyl-L-alanine + D-glutamate + ATP = UDP-N-acetyl-alpha-D-muramoyl-L-alanyl-D-glutamate + ADP + phosphate + H(+). Its pathway is cell wall biogenesis; peptidoglycan biosynthesis. Its function is as follows. Cell wall formation. Catalyzes the addition of glutamate to the nucleotide precursor UDP-N-acetylmuramoyl-L-alanine (UMA). This chain is UDP-N-acetylmuramoylalanine--D-glutamate ligase, found in Lacticaseibacillus paracasei (strain ATCC 334 / BCRC 17002 / CCUG 31169 / CIP 107868 / KCTC 3260 / NRRL B-441) (Lactobacillus paracasei).